The primary structure comprises 436 residues: tRNA(Ile)-lysidine synthase (436 aa).

27–32 (SGGVDS) contacts ATP.

It belongs to the tRNA(Ile)-lysidine synthase family.

The protein localises to the cytoplasm. The enzyme catalyses cytidine(34) in tRNA(Ile2) + L-lysine + ATP = lysidine(34) in tRNA(Ile2) + AMP + diphosphate + H(+). Ligates lysine onto the cytidine present at position 34 of the AUA codon-specific tRNA(Ile) that contains the anticodon CAU, in an ATP-dependent manner. Cytidine is converted to lysidine, thus changing the amino acid specificity of the tRNA from methionine to isoleucine. This chain is tRNA(Ile)-lysidine synthase, found in Vibrio vulnificus (strain CMCP6).